The sequence spans 266 residues: Putative carbamate hydrolase RutD (266 aa).

Positions 14–115 (PVVVLISGLG…TMLVSVNGWL (102 aa)) constitute an AB hydrolase-1 domain.

The protein belongs to the AB hydrolase superfamily. Hydrolase RutD family.

It carries out the reaction carbamate + 2 H(+) = NH4(+) + CO2. In terms of biological role, involved in pyrimidine catabolism. May facilitate the hydrolysis of carbamate, a reaction that can also occur spontaneously. The polypeptide is Putative carbamate hydrolase RutD (Shigella flexneri serotype X (strain 2002017)).